A 280-amino-acid chain; its full sequence is Ribosomal protein L11 methyltransferase (280 aa).

4 residues coordinate S-adenosyl-L-methionine: Thr131, Gly152, Asp174, and Asn217.

This sequence belongs to the methyltransferase superfamily. PrmA family.

The protein resides in the cytoplasm. It carries out the reaction L-lysyl-[protein] + 3 S-adenosyl-L-methionine = N(6),N(6),N(6)-trimethyl-L-lysyl-[protein] + 3 S-adenosyl-L-homocysteine + 3 H(+). Its function is as follows. Methylates ribosomal protein L11. The sequence is that of Ribosomal protein L11 methyltransferase from Bacteroides fragilis (strain ATCC 25285 / DSM 2151 / CCUG 4856 / JCM 11019 / LMG 10263 / NCTC 9343 / Onslow / VPI 2553 / EN-2).